Here is a 389-residue protein sequence, read N- to C-terminus: Transcription factor MYB97 (389 aa).

HTH myb-type domains are found at residues 16 to 68 (GVVL…ANHL) and 69 to 123 (RPNL…KRFQ). DNA-binding regions (H-T-H motif) lie at residues 44–68 (WNSV…ANHL) and 96–119 (WARM…NTRL). Residues 131 to 159 (PPEYSQNNHQQQMYPQQPSSPLPSQTPAS) are disordered. The span at 140-159 (QQQMYPQQPSSPLPSQTPAS) shows a compositional bias: low complexity.

As to expression, accumulates in pollen grains and pollen tube. Mostly expressed in mature pollen grains, and, to a lower extent, in inflorescences and siliques.

The protein resides in the nucleus. Its function is as follows. Transcription activator. Binds to 5'-CAACTGTC-3' and/or 5'-TAACAAA-3' motif in target gene promoter to promote their expression. Together with MYB101 and MYB120, functions as a male factor that controls pollen tube-synergid interaction in fertilization. Required for pollen tube growth arrest and sperm cell release in the female gametophyte, probably via the regulation of pollen tube-specific gene expression. The protein is Transcription factor MYB97 of Arabidopsis thaliana (Mouse-ear cress).